Consider the following 245-residue polypeptide: 1-(5-phosphoribosyl)-5-[(5-phosphoribosylamino)methylideneamino] imidazole-4-carboxamide isomerase (245 aa).

Asp7 serves as the catalytic Proton acceptor. Asp129 acts as the Proton donor in catalysis.

This sequence belongs to the HisA/HisF family.

The protein resides in the cytoplasm. It carries out the reaction 1-(5-phospho-beta-D-ribosyl)-5-[(5-phospho-beta-D-ribosylamino)methylideneamino]imidazole-4-carboxamide = 5-[(5-phospho-1-deoxy-D-ribulos-1-ylimino)methylamino]-1-(5-phospho-beta-D-ribosyl)imidazole-4-carboxamide. It participates in amino-acid biosynthesis; L-histidine biosynthesis; L-histidine from 5-phospho-alpha-D-ribose 1-diphosphate: step 4/9. This is 1-(5-phosphoribosyl)-5-[(5-phosphoribosylamino)methylideneamino] imidazole-4-carboxamide isomerase from Aliivibrio fischeri (strain ATCC 700601 / ES114) (Vibrio fischeri).